Consider the following 407-residue polypeptide: V-set and immunoglobulin domain-containing protein 1 (407 aa).

Positions 1–22 (MMVFAFWKVFLILNCLAGQVSM) are cleaved as a signal peptide. The region spanning 23–134 (VQVTIPDTFV…HFVGKNQGLL (112 aa)) is the Ig-like V-type domain. Residues 23-234 (VQVTIPDTFV…EIDLTSSHPE (212 aa)) are Extracellular-facing. A glycan (N-linked (GlcNAc...) asparagine) is linked at Asn39. Intrachain disulfides connect Cys44/Cys118 and Cys163/Cys213. The Ig-like C2-type domain maps to 145–229 (PFCTIQGRPE…GNSSCEIDLT (85 aa)). Asn202 and Asn221 each carry an N-linked (GlcNAc...) asparagine glycan. The helical transmembrane segment at 235-255 (VGIIIGALVGALIGAAVIICV) threads the bilayer. Topologically, residues 256 to 407 (VYFARNKVKS…SKAGEDTVKA (152 aa)) are cytoplasmic. Disordered regions lie at residues 268–289 (QKNL…PQQS) and 318–407 (TAVL…TVKA). A phosphoserine mark is found at Ser273 and Ser274. Positions 361 to 371 (DPETETEPEPE) are enriched in acidic residues.

It localises to the membrane. The protein is V-set and immunoglobulin domain-containing protein 1 (Vsig1) of Mus musculus (Mouse).